A 269-amino-acid chain; its full sequence is Diaminopimelate epimerase (269 aa).

Substrate-binding residues include N13, Q46, and N65. The active-site Proton donor is C74. Substrate contacts are provided by residues 75-76 (GN), N149, N182, and 200-201 (ER). C209 acts as the Proton acceptor in catalysis. 210-211 (GT) contacts substrate.

This sequence belongs to the diaminopimelate epimerase family. As to quaternary structure, homodimer.

It is found in the cytoplasm. The enzyme catalyses (2S,6S)-2,6-diaminopimelate = meso-2,6-diaminopimelate. It functions in the pathway amino-acid biosynthesis; L-lysine biosynthesis via DAP pathway; DL-2,6-diaminopimelate from LL-2,6-diaminopimelate: step 1/1. Its function is as follows. Catalyzes the stereoinversion of LL-2,6-diaminopimelate (L,L-DAP) to meso-diaminopimelate (meso-DAP), a precursor of L-lysine and an essential component of the bacterial peptidoglycan. The sequence is that of Diaminopimelate epimerase from Zymomonas mobilis subsp. mobilis (strain ATCC 31821 / ZM4 / CP4).